A 390-amino-acid polypeptide reads, in one-letter code: Magnesium-protoporphyrin IX monomethyl ester [oxidative] cyclase (390 aa).

The protein belongs to the AcsF family. Fe cation is required as a cofactor.

It catalyses the reaction Mg-protoporphyrin IX 13-monomethyl ester + 3 NADPH + 3 O2 + 2 H(+) = 3,8-divinyl protochlorophyllide a + 3 NADP(+) + 5 H2O. It functions in the pathway porphyrin-containing compound metabolism; chlorophyll biosynthesis (light-independent). Its function is as follows. Catalyzes the formation of the isocyclic ring in chlorophyll biosynthesis. Mediates the cyclase reaction, which results in the formation of divinylprotochlorophyllide (Pchlide) characteristic of all chlorophylls from magnesium-protoporphyrin IX 13-monomethyl ester (MgPMME). The chain is Magnesium-protoporphyrin IX monomethyl ester [oxidative] cyclase from Prochlorococcus marinus (strain MIT 9312).